Reading from the N-terminus, the 466-residue chain is ATP-dependent protease ATPase subunit HslU (466 aa).

ATP-binding positions include Ile18, 60 to 65 (GVGKTE), Asp279, Glu344, and Arg416.

Belongs to the ClpX chaperone family. HslU subfamily. A double ring-shaped homohexamer of HslV is capped on each side by a ring-shaped HslU homohexamer. The assembly of the HslU/HslV complex is dependent on binding of ATP.

The protein localises to the cytoplasm. ATPase subunit of a proteasome-like degradation complex; this subunit has chaperone activity. The binding of ATP and its subsequent hydrolysis by HslU are essential for unfolding of protein substrates subsequently hydrolyzed by HslV. HslU recognizes the N-terminal part of its protein substrates and unfolds these before they are guided to HslV for hydrolysis. This chain is ATP-dependent protease ATPase subunit HslU, found in Lactobacillus acidophilus (strain ATCC 700396 / NCK56 / N2 / NCFM).